The following is a 337-amino-acid chain: Tetraacyldisaccharide 4'-kinase (337 aa).

72-79 (TVGGSGKT) is an ATP binding site.

The protein belongs to the LpxK family.

It carries out the reaction a lipid A disaccharide + ATP = a lipid IVA + ADP + H(+). It functions in the pathway glycolipid biosynthesis; lipid IV(A) biosynthesis; lipid IV(A) from (3R)-3-hydroxytetradecanoyl-[acyl-carrier-protein] and UDP-N-acetyl-alpha-D-glucosamine: step 6/6. In terms of biological role, transfers the gamma-phosphate of ATP to the 4'-position of a tetraacyldisaccharide 1-phosphate intermediate (termed DS-1-P) to form tetraacyldisaccharide 1,4'-bis-phosphate (lipid IVA). The chain is Tetraacyldisaccharide 4'-kinase from Shewanella sediminis (strain HAW-EB3).